The following is a 377-amino-acid chain: Erythronate-4-phosphate dehydrogenase (377 aa).

Residues serine 45 and threonine 67 each coordinate substrate. NAD(+) is bound by residues 127–128 (QV), aspartate 147, and threonine 176. The active site involves arginine 209. Aspartate 233 serves as a coordination point for NAD(+). Glutamate 238 is a catalytic residue. Residue histidine 255 is the Proton donor of the active site. Residue glycine 258 participates in NAD(+) binding. Tyrosine 259 provides a ligand contact to substrate.

This sequence belongs to the D-isomer specific 2-hydroxyacid dehydrogenase family. PdxB subfamily. As to quaternary structure, homodimer.

Its subcellular location is the cytoplasm. The catalysed reaction is 4-phospho-D-erythronate + NAD(+) = (R)-3-hydroxy-2-oxo-4-phosphooxybutanoate + NADH + H(+). It functions in the pathway cofactor biosynthesis; pyridoxine 5'-phosphate biosynthesis; pyridoxine 5'-phosphate from D-erythrose 4-phosphate: step 2/5. Its function is as follows. Catalyzes the oxidation of erythronate-4-phosphate to 3-hydroxy-2-oxo-4-phosphonooxybutanoate. This chain is Erythronate-4-phosphate dehydrogenase, found in Vibrio atlanticus (strain LGP32) (Vibrio splendidus (strain Mel32)).